The primary structure comprises 1921 residues: Endoribonuclease Dicer (1921 aa).

Positions 51-227 constitute a Helicase ATP-binding domain; sequence LLEAALDHNT…ELEEKIKKLE (177 aa). 64-71 lines the ATP pocket; sequence LNTGSGKT. Residues 175 to 178 carry the DECH box motif; sequence DECH. The disordered stretch occupies residues 409-433; it reads YVSWSDSEDDDEDEEIEEKEKPETN. Residues 414–425 show a composition bias toward acidic residues; it reads DSEDDDEDEEIE. Positions 433-602 constitute a Helicase C-terminal domain; that stretch reads NFPSPFTNIL…SVDTSETETE (170 aa). One can recognise a Dicer dsRNA-binding fold domain in the interval 630-722; sequence AIGHINRYCA…MPVGKETVKY (93 aa). The segment at 727–746 is disordered; sequence DLHDEEETSVPGRPGSTKRR. The PAZ domain occupies 895–1042; sequence KFMEDIEKSE…LVPELCAIHP (148 aa). The disordered stretch occupies residues 1270–1289; it reads NLSKDKVDSEKNTSSGYSSK. RNase III domains are found at residues 1277–1404 and 1665–1823; these read DSEK…EETT and FENF…MDSG. 4 residues coordinate Mg(2+): glutamate 1317, aspartate 1396, glutamate 1399, and glutamate 1704. Residues 1782-1801 form a disordered region; it reads QGMDSELRRSEEDEEKEEDI. Positions 1809 and 1812 each coordinate Mg(2+). Positions 1848-1913 constitute a DRBM domain; the sequence is VPRSPVRELL…ARRALRSLKA (66 aa).

This sequence belongs to the helicase family. Dicer subfamily. Component of the RISC loading complex (RLC), or micro-RNA (miRNA) loading complex (miRLC), which is composed of DICER1, AGO2 and TARBP2; DICER1 and TARBP2 are required to process precursor miRNAs (pre-miRNAs) to mature miRNAs and then load them onto AGO2. Note that the trimeric RLC/miRLC is also referred to as RISC. It depends on Mg(2+) as a cofactor. Mn(2+) serves as cofactor.

Its subcellular location is the cytoplasm. The enzyme catalyses Endonucleolytic cleavage to 5'-phosphomonoester.. Its function is as follows. Double-stranded RNA (dsRNA) endoribonuclease playing a central role in short dsRNA-mediated post-transcriptional gene silencing. Cleaves naturally occurring long dsRNAs and short hairpin pre-microRNAs (miRNA) into fragments of twenty-one to twenty-three nucleotides with 3' overhang of two nucleotides, producing respectively short interfering RNAs (siRNA) and mature microRNAs. SiRNAs and miRNAs serve as guide to direct the RNA-induced silencing complex (RISC) to complementary RNAs to degrade them or prevent their translation. Gene silencing mediated by siRNAs, also called RNA interference, controls the elimination of transcripts from mobile and repetitive DNA elements of the genome but also the degradation of exogenous RNA of viral origin for instance. The miRNA pathway on the other side is a mean to specifically regulate the expression of target genes. In Gallus gallus (Chicken), this protein is Endoribonuclease Dicer (DICER1).